Consider the following 267-residue polypeptide: MIGREYQKYYTPTFFDFVALICAWAFLLLTFPVSIFFCVKIVKEYDRMVIFRLGRLWQDNPRGPGIVLVLPFIDSHKTVDLRVMSYDVPTQEMLTRDSVTIGVDAAVYYRTSDPIASLARVNDAHMSTRQLAQSSLRNVLGTRSLAELMTDRHGIAVQVKYILDSATLFWGIHVERVEIKDIRLPREMCRAMAAEAEAQRESDAKVVTAQGELDASMAFQKAADELAGSPTALQLRYLQTLVKISAHDNHTIVVPFPMEYIKKKIRK.

Residues 17–37 traverse the membrane as a helical segment; it reads FVALICAWAFLLLTFPVSIFF.

The protein belongs to the band 7/mec-2 family.

It is found in the membrane. In Caenorhabditis elegans, this protein is Stomatin-3 (sto-3).